Reading from the N-terminus, the 201-residue chain is MFTGIVEERGEVTGREALVDAARLTIRGPMVTADAGHGDSIAVNGVCLTVVDVLPDGQFTADVMAETLNRSNLGELRPGSRVNLERAAALGSRLGGHIVQGHVDATGEIVARCPSEHWEVVRIEMPASVARYVVEKGSITVDGISLTVSGLGAEQRDWFEVSLIPTTRELTTLGSAAVGTRVNLEVDVVAKYVERLMRSAG.

Lumazine-binding repeat units lie at residues 1–97 and 98–197; these read MFTG…LGGH and IVQG…ERLM. Residues 4–6, 47–49, 62–67, 101–103, Lys-136, 145–147, and 162–167 contribute to the 2,4-dihydroxypteridine site; these read GIV, CLT, DVMAET, GHV, SLT, and SLIPTT.

In terms of assembly, homotrimer.

The enzyme catalyses 2 6,7-dimethyl-8-(1-D-ribityl)lumazine + H(+) = 5-amino-6-(D-ribitylamino)uracil + riboflavin. The protein operates within cofactor biosynthesis; riboflavin biosynthesis; riboflavin from 2-hydroxy-3-oxobutyl phosphate and 5-amino-6-(D-ribitylamino)uracil: step 2/2. Its function is as follows. Catalyzes the dismutation of two molecules of 6,7-dimethyl-8-ribityllumazine, resulting in the formation of riboflavin and 5-amino-6-(D-ribitylamino)uracil. The polypeptide is Riboflavin synthase (ribE) (Mycobacterium bovis (strain ATCC BAA-935 / AF2122/97)).